The chain runs to 43 residues: YKRCHKKEGHCFPKTVICLPPSSDFGKMDCRWKWKCCKKGSVN.

3 disulfide bridges follow: C4–C36, C11–C30, and C18–C37.

Belongs to the crotamine-myotoxin family. In terms of assembly, monomer. As to expression, expressed by the venom gland.

It is found in the secreted. Its function is as follows. Cationic peptide that possesses multiple functions. It acts as a cell-penetrating peptide (CPP), and as a potent voltage-gated potassium channel (Kv) inhibitor. It exhibits antimicrobial activities, hind limb paralysis, and severe muscle necrosis by a non-enzymatic mechanism. The sequence is that of Myotoxin-1 from Crotalus concolor (Midget faded rattlesnake).